Reading from the N-terminus, the 101-residue chain is NAD(P)H-quinone oxidoreductase subunit 4L, chloroplastic (101 aa).

A run of 3 helical transmembrane segments spans residues 2–22, 32–52, and 61–81; these read MLEH…YGLI, MCLE…SDLF, and IFSI…PAIV.

The protein belongs to the complex I subunit 4L family. As to quaternary structure, NDH is composed of at least 16 different subunits, 5 of which are encoded in the nucleus.

It is found in the plastid. It localises to the chloroplast thylakoid membrane. It carries out the reaction a plastoquinone + NADH + (n+1) H(+)(in) = a plastoquinol + NAD(+) + n H(+)(out). The enzyme catalyses a plastoquinone + NADPH + (n+1) H(+)(in) = a plastoquinol + NADP(+) + n H(+)(out). Its function is as follows. NDH shuttles electrons from NAD(P)H:plastoquinone, via FMN and iron-sulfur (Fe-S) centers, to quinones in the photosynthetic chain and possibly in a chloroplast respiratory chain. The immediate electron acceptor for the enzyme in this species is believed to be plastoquinone. Couples the redox reaction to proton translocation, and thus conserves the redox energy in a proton gradient. The protein is NAD(P)H-quinone oxidoreductase subunit 4L, chloroplastic of Illicium oligandrum (Star anise).